The primary structure comprises 46 residues: Diuretic hormone (46 aa).

Position 46 is an isoleucine amide (Ile-46).

This sequence belongs to the sauvagine/corticotropin-releasing factor/urotensin I family.

It is found in the secreted. Its function is as follows. Regulation of fluid secretion. Stimulates primary urine secretion by Malpighian tubules and causes a dose-dependent stimulation of cAMP levels in the tubules. The sequence is that of Diuretic hormone from Periplaneta americana (American cockroach).